The following is a 388-amino-acid chain: MKIISVLGSTGSIGTQTLEVVRNNKDLKVSALAASSNITLLEEQIREFHPKLVCVYDREKALELKKRVSDLEVTVEAGMDGLIACATEESADIVVSAVVGMIGIKPVMEAILRGKDIAFANKETLVTAGHLIMPLVKKHNVNLLPVDSEHSAIFQCLQGNESSTVSRIILTASGGPFRGKSLAELKNVKVEDALKHPNWSMGRKITIDSATMVNKGLEVMEAHWLFHEPLNKIEVVIQPQSIIHSAVEFEDGGIIAQLGTPDMKLPIQYALYYPEKRRYLPGKRLDFFDIAKITFEKPDISNLPGLRLAYEAMNTGHSVPTVFNAANELAVAKFLNREISFLSITALIEKAMENVTVVKRPTLDEILNVEQETYDFIERECVKSNYHI.

The NADPH site is built by Thr10, Gly11, Ser12, Ile13, Asn37, and Asn121. Lys122 lines the 1-deoxy-D-xylulose 5-phosphate pocket. NADPH is bound at residue Glu123. Asp147 contributes to the Mn(2+) binding site. The 1-deoxy-D-xylulose 5-phosphate site is built by Ser148, Glu149, Ser173, and His196. Glu149 is a Mn(2+) binding site. An NADPH-binding site is contributed by Gly202. Residues Ser209, Asn214, Lys215, and Glu218 each coordinate 1-deoxy-D-xylulose 5-phosphate. Glu218 is a binding site for Mn(2+).

It belongs to the DXR family. The cofactor is Mg(2+). It depends on Mn(2+) as a cofactor.

It carries out the reaction 2-C-methyl-D-erythritol 4-phosphate + NADP(+) = 1-deoxy-D-xylulose 5-phosphate + NADPH + H(+). The protein operates within isoprenoid biosynthesis; isopentenyl diphosphate biosynthesis via DXP pathway; isopentenyl diphosphate from 1-deoxy-D-xylulose 5-phosphate: step 1/6. Its function is as follows. Catalyzes the NADPH-dependent rearrangement and reduction of 1-deoxy-D-xylulose-5-phosphate (DXP) to 2-C-methyl-D-erythritol 4-phosphate (MEP). The polypeptide is 1-deoxy-D-xylulose 5-phosphate reductoisomerase (Lachnoclostridium phytofermentans (strain ATCC 700394 / DSM 18823 / ISDg) (Clostridium phytofermentans)).